Reading from the N-terminus, the 189-residue chain is ECF RNA polymerase sigma-E factor (189 aa).

Residues 1 to 153 form a binds RNAP core region; it reads MAEQLTDQAL…TAITLRELEG (153 aa). The tract at residues 25–92 is sigma-70 factor domain-2; it reads LVSRYQNKVA…KNYLTAQGRR (68 aa). The Polymerase core binding motif lies at 48–61; sequence DVVQESFIKAYRSI. A sigma-70 factor domain-4 region spans residues 129–180; the sequence is RIVFDTIHNLPEDLKTAITLRELEGLSYEDIAEIMDCPVGTVRSRIFRAREM. Residues 156–175 constitute a DNA-binding region (H-T-H motif); the sequence is YEDIAEIMDCPVGTVRSRIF.

Belongs to the sigma-70 factor family. ECF subfamily. As to quaternary structure, interacts transiently with the RNAP catalytic core formed by RpoA, RpoB, RpoC and RpoZ (2 alpha, 1 beta, 1 beta' and 1 omega subunit) to form the RNAP holoenzyme that can initiate transcription. Interacts 1:1 with anti-sigma-E factor RseA which prevents binding to RNAP catalytic core.

The protein localises to the cytoplasm. Its activity is regulated as follows. ECF sigma-E is held in an inactive form by its cognate anti-sigma factor (RseA) until released by regulated intramembrane proteolysis (RIP). RIP occurs when an extracytoplasmic signal (periplasmic stress and excess LPS) triggers a concerted proteolytic cascade to transmit information and elicit cellular responses. The anti-sigma factor RseA is an inner membrane protein, binding sigma-E in the cytoplasm and RseB in the periplasm. RseA is first cut extracytoplasmically (site-1 protease, S1P, by DegS), then within the membrane itself (site-2 protease, S2P, by RseP), while cytoplasmic proteases (predominantly ClpX-ClpP) finish degrading the regulatory protein, liberating sigma-E. Degradation of RseA requires 2 signals to activate DegS; an outer membrane protein (OMP) signal activates DegS, while an LPS signal causes release of RseB from RseA, freeing RseA to be cleaved. Its function is as follows. Sigma factors are initiation factors that promote the attachment of RNA polymerase (RNAP) to specific initiation sites and are then released. Extracytoplasmic function (ECF) sigma-E controls the envelope stress response, responding to periplasmic protein stress, increased levels of periplasmic lipopolysaccharide (LPS) as well as heat shock and oxidative stress; it controls protein processing in the extracytoplasmic compartment. The polypeptide is ECF RNA polymerase sigma-E factor (rpoE) (Haemophilus influenzae (strain ATCC 51907 / DSM 11121 / KW20 / Rd)).